A 353-amino-acid polypeptide reads, in one-letter code: D-alanine--D-alanine ligase (353 aa).

The region spanning 135-344 (KMVFAQAGLA…FPQLVDRLVQ (210 aa)) is the ATP-grasp domain. 171–226 (EAQLDYPMFVKPANLGSSVGISKVRTRDELEKALDLAAEYDRRLIVEAGVTAREVE) contributes to the ATP binding site. Mg(2+) contacts are provided by Asp-297, Glu-311, and Asn-313.

Belongs to the D-alanine--D-alanine ligase family. It depends on Mg(2+) as a cofactor. Mn(2+) serves as cofactor.

Its subcellular location is the cytoplasm. The enzyme catalyses 2 D-alanine + ATP = D-alanyl-D-alanine + ADP + phosphate + H(+). It participates in cell wall biogenesis; peptidoglycan biosynthesis. In terms of biological role, cell wall formation. The chain is D-alanine--D-alanine ligase from Picosynechococcus sp. (strain ATCC 27264 / PCC 7002 / PR-6) (Agmenellum quadruplicatum).